We begin with the raw amino-acid sequence, 492 residues long: Transcription factor IIIB 60 kDa subunit (492 aa).

The segment at 1 to 30 (MGCPNCGSTTFESDTASGNTYCTQCGVVVE) adopts a TFIIB-type zinc-finger fold. Positions 3, 6, 22, and 25 each coordinate Zn(2+). The segment at 440–468 (QPRKRRRYRPRDSTSDGIADTAAESAKEM) is disordered.

The protein belongs to the TFIIB family. In terms of assembly, TFIIIB comprises the TATA-binding protein (TBP), the B-related factor (BRF) and a third subunit (Potential). Interacts with maf1.

It is found in the nucleus. In terms of biological role, general activator of RNA polymerase III transcription. In Schizosaccharomyces pombe (strain 972 / ATCC 24843) (Fission yeast), this protein is Transcription factor IIIB 60 kDa subunit (brf1).